The sequence spans 274 residues: 2,3,4,5-tetrahydropyridine-2,6-dicarboxylate N-succinyltransferase (274 aa).

Substrate contacts are provided by R106 and D143.

It belongs to the transferase hexapeptide repeat family. Homotrimer.

The protein localises to the cytoplasm. The enzyme catalyses (S)-2,3,4,5-tetrahydrodipicolinate + succinyl-CoA + H2O = (S)-2-succinylamino-6-oxoheptanedioate + CoA. Its pathway is amino-acid biosynthesis; L-lysine biosynthesis via DAP pathway; LL-2,6-diaminopimelate from (S)-tetrahydrodipicolinate (succinylase route): step 1/3. In Acidovorax sp. (strain JS42), this protein is 2,3,4,5-tetrahydropyridine-2,6-dicarboxylate N-succinyltransferase.